The following is a 190-amino-acid chain: Surfactant protein C (190 aa).

Positions 1-24 (MDVGSKEVLMESPPDYTAVPGGRL) are excised as a propeptide. 2 S-palmitoyl cysteine lipidation sites follow: cysteine 28 and cysteine 29. The propeptide occupies 59 to 190 (HMSQKHTEMV…LCGEVPLYYT (132 aa)). In terms of domain architecture, BRICHOS spans 94–190 (FSIGSTGTVV…LCGEVPLYYT (97 aa)). Cysteines 121 and 182 form a disulfide.

It is found in the secreted. It localises to the extracellular space. Its subcellular location is the surface film. In terms of biological role, pulmonary surfactant associated proteins promote alveolar stability by lowering the surface tension at the air-liquid interface in the peripheral air spaces. The chain is Surfactant protein C (SFTPC) from Bos taurus (Bovine).